Consider the following 264-residue polypeptide: Small ribosomal subunit protein eS1 (264 aa).

The interval 232–264 (HGEGGGAGKPSGDEAGTKVERADGYEPPVQESV) is disordered. The span at 242-255 (SGDEAGTKVERADG) shows a compositional bias: basic and acidic residues.

It belongs to the eukaryotic ribosomal protein eS1 family. As to quaternary structure, component of the small ribosomal subunit. Mature ribosomes consist of a small (40S) and a large (60S) subunit. The 40S subunit contains about 33 different proteins and 1 molecule of RNA (18S). The 60S subunit contains about 49 different proteins and 3 molecules of RNA (28S, 5.8S and 5S). Part of the small subunit (SSU) processome, composed of more than 70 proteins and the RNA chaperone small nucleolar RNA (snoRNA) U3.

The protein resides in the cytoplasm. Its subcellular location is the nucleus. It is found in the nucleolus. In terms of biological role, component of the small ribosomal subunit. The ribosome is a large ribonucleoprotein complex responsible for the synthesis of proteins in the cell. Part of the small subunit (SSU) processome, first precursor of the small eukaryotic ribosomal subunit. During the assembly of the SSU processome in the nucleolus, many ribosome biogenesis factors, an RNA chaperone and ribosomal proteins associate with the nascent pre-rRNA and work in concert to generate RNA folding, modifications, rearrangements and cleavage as well as targeted degradation of pre-ribosomal RNA by the RNA exosome. May play a role during erythropoiesis. In Taeniopygia guttata (Zebra finch), this protein is Small ribosomal subunit protein eS1.